Reading from the N-terminus, the 46-residue chain is Large ribosomal subunit protein bL36 (46 aa).

This sequence belongs to the bacterial ribosomal protein bL36 family.

This is Large ribosomal subunit protein bL36 from Photorhabdus laumondii subsp. laumondii (strain DSM 15139 / CIP 105565 / TT01) (Photorhabdus luminescens subsp. laumondii).